The chain runs to 312 residues: uncharacterized protein (312 aa).

Residues 95–119 (EKRRENPPKLTLPPLPPPAEERKKP) are disordered.

Its subcellular location is the plastid. The protein localises to the chloroplast. This is an uncharacterized protein from Chlamydomonas moewusii (Chlamydomonas eugametos).